Consider the following 333-residue polypeptide: Methenyltetrahydromethanopterin cyclohydrolase (333 aa).

Belongs to the MCH family.

The protein resides in the cytoplasm. It carries out the reaction 5,10-methenyl-5,6,7,8-tetrahydromethanopterin + H2O = N(5)-formyl-5,6,7,8-tetrahydromethanopterin + H(+). It functions in the pathway one-carbon metabolism; formaldehyde degradation; formate from formaldehyde (H(4)MPT route): step 3/5. Catalyzes the hydrolysis of methenyl-H(4)MPT(+) to 5-formyl-H(4)MPT. This is Methenyltetrahydromethanopterin cyclohydrolase (mch) from Rhodopirellula baltica (strain DSM 10527 / NCIMB 13988 / SH1).